Here is a 96-residue protein sequence, read N- to C-terminus: MSAVIMQQGDLLLNLYIQPKASRDQIVGLHGDELKVAITAPPIDGKANAHLSKYLAKAFKVPKSDVHILKGELGRHKQVRINAPKSVPAEISALLE.

Belongs to the UPF0235 family.

The chain is UPF0235 protein SO_3356 from Shewanella oneidensis (strain ATCC 700550 / JCM 31522 / CIP 106686 / LMG 19005 / NCIMB 14063 / MR-1).